Reading from the N-terminus, the 358-residue chain is PDZ and LIM domain protein 3 (358 aa).

The 84-residue stretch at 1-84 (MPQNVLLPGP…QLCLKIDRAE (84 aa)) folds into the PDZ domain. Disordered stretches follow at residues 126–155 (FILPGRSSGSSTPSGFDPGSGRSTPSSVST) and 237–274 (DTEHPSKPRQSGSFKILQDMVDDDPDRPSGTRSVRAPV). A compositionally biased stretch (low complexity) spans 129–146 (PGRSSGSSTPSGFDPGSG). Residues 288–347 (PICDRCGNGIVGTVVKAKDKLRHPDCFVCSDCNLNLKQKGYFFVEGQLYCEAHARARMRP) form the LIM zinc-binding domain.

It is found in the cytoplasm. Its subcellular location is the myofibril. The protein resides in the sarcomere. The protein localises to the z line. Its function is as follows. May play a role in the organization of actin filament arrays within muscle cells. The polypeptide is PDZ and LIM domain protein 3 (pdlim3) (Xenopus laevis (African clawed frog)).